The primary structure comprises 318 residues: uncharacterized protein (318 aa).

It belongs to the glycosyltransferase 2 family.

This is an uncharacterized protein from Rickettsia prowazekii (strain Madrid E).